We begin with the raw amino-acid sequence, 279 residues long: Bifunctional protein FolD (279 aa).

NADP(+) is bound by residues 162 to 164 (GRS), S187, and I228.

This sequence belongs to the tetrahydrofolate dehydrogenase/cyclohydrolase family. As to quaternary structure, homodimer.

The enzyme catalyses (6R)-5,10-methylene-5,6,7,8-tetrahydrofolate + NADP(+) = (6R)-5,10-methenyltetrahydrofolate + NADPH. The catalysed reaction is (6R)-5,10-methenyltetrahydrofolate + H2O = (6R)-10-formyltetrahydrofolate + H(+). Its pathway is one-carbon metabolism; tetrahydrofolate interconversion. Functionally, catalyzes the oxidation of 5,10-methylenetetrahydrofolate to 5,10-methenyltetrahydrofolate and then the hydrolysis of 5,10-methenyltetrahydrofolate to 10-formyltetrahydrofolate. The chain is Bifunctional protein FolD from Acidiphilium cryptum (strain JF-5).